Consider the following 231-residue polypeptide: MGLKDELTTFCHDVFNGNWETTEGKNVPDEDSRLTLKNTAITIDGTVLYADLDGSTAMVDGYKNWFAAEIYKTYLYCCARIIAAEGGVVTAYDGDRVMALFIGERKNTRAARAAMKIKWAVDEIIMPKKDARYTSNKFALKHVTGIDTCSLFVAKTGARGANDLVWVGRAANYAAKLTSLPSTYTYITESVYKMLADEAKTSNGKSMWEKVTWNTFNNSTIYRSNWRWRID.

Positions 46 to 178 (TVLYADLDGS…RAANYAAKLT (133 aa)) constitute a Guanylate cyclase domain. Tyr-49 lines the a ribonucleoside 5'-triphosphate pocket. The Mn(2+) site is built by Asp-51 and Asp-95. Residue Arg-96 participates in a ribonucleoside 5'-triphosphate binding.

Belongs to the adenylyl cyclase class-4/guanylyl cyclase family. Pyrimidine cyclase subfamily. As to quaternary structure, homodimer. Requires Mn(2+) as cofactor.

Its subcellular location is the cytoplasm. It catalyses the reaction UTP = 3',5'-cyclic UMP + diphosphate. In terms of biological role, pycsar (pyrimidine cyclase system for antiphage resistance) provides immunity against bacteriophage. The pyrimidine cyclase (PycC) synthesizes cyclic nucleotides in response to infection; these serve as specific second messenger signals. The signal activates the adjacent effector, leading to bacterial cell death and abortive phage infection. A clade B Pycsar system. The pyrimidine cyclase gene of a two-gene Pycsar system, generates cyclic UMP (cUMP) from UTP probably in response to bacteriophage infection. Expression of this and adjacent effector XpPycTIR (AC P0DV29) confers resistance to bacteriophage T7. When cells expressing the Pycsar system are infected phage T7 at low multiplicity of infection (0.2 MOI) the culture survives, at 2.0 MOI bacteria enter growth arrest. The same cells enter growth arrest after exposure to 2.5 mM cUMP but not cCMP; the effector protein responds only to the cUMP produced by its cognate NTP cyclase. The sequence is that of Uridylate cyclase from Xanthomonas perforans.